We begin with the raw amino-acid sequence, 93 residues long: Small ribosomal subunit protein uS19 (93 aa).

The protein belongs to the universal ribosomal protein uS19 family.

Functionally, protein S19 forms a complex with S13 that binds strongly to the 16S ribosomal RNA. This Kocuria rhizophila (strain ATCC 9341 / DSM 348 / NBRC 103217 / DC2201) protein is Small ribosomal subunit protein uS19.